The chain runs to 163 residues: Nucleotide-binding protein Mmcs_0777 (163 aa).

It belongs to the YajQ family.

Its function is as follows. Nucleotide-binding protein. This is Nucleotide-binding protein Mmcs_0777 from Mycobacterium sp. (strain MCS).